Here is a 225-residue protein sequence, read N- to C-terminus: Probable manganese catalase (225 aa).

A Mn(2+)-binding site is contributed by glutamate 37. Aspartate 58 and aspartate 62 together coordinate Ca(2+). Mn(2+) is bound by residues glutamate 67, histidine 70, glutamate 138, and histidine 171. Serine 204 contributes to the Ca(2+) binding site. The tract at residues 204–225 is disordered; sequence STPGRYVQDPNPTEPSFSNPRR. Polar residues predominate over residues 213-225; it reads PNPTEPSFSNPRR.

Belongs to the manganese catalase family. Ca(2+) serves as cofactor. Requires Mn(2+) as cofactor.

It catalyses the reaction 2 H2O2 = O2 + 2 H2O. In terms of biological role, catalyzes the decomposition of hydrogen peroxide into water and oxygen. In Clostridium acetobutylicum (strain ATCC 824 / DSM 792 / JCM 1419 / IAM 19013 / LMG 5710 / NBRC 13948 / NRRL B-527 / VKM B-1787 / 2291 / W), this protein is Probable manganese catalase.